Reading from the N-terminus, the 78-residue chain is U7-lycotoxin-Ls1d (78 aa).

The signal sequence occupies residues 1–22 (MKLIIFTGLALLLIVSLIDVEA). Positions 23–26 (QNEG) are excised as a propeptide.

Belongs to the neurotoxin 19 (CSTX) family. 07 (U7-Lctx) subfamily. Post-translationally, contains 4 disulfide bonds. As to expression, expressed by the venom gland.

Its subcellular location is the secreted. This Lycosa singoriensis (Wolf spider) protein is U7-lycotoxin-Ls1d.